We begin with the raw amino-acid sequence, 470 residues long: Calcium-binding and coiled-coil domain-containing protein 2 (470 aa).

Positions 131-134 match the CLIR motif; that stretch reads ILLV. Residues 132-368 adopt a coiled-coil conformation; the sequence is LLVTTEEEAQ…QMEDLSYTLE (237 aa). Residues 201–204 carry the LIR-like motif; it reads QQNQ. The UBZ1-type zinc finger occupies 441–464; sequence QMQCPECGSEFENFQVFQDHIFCH. Positions 444, 447, 460, and 464 each coordinate Zn(2+).

The protein belongs to the CALCOCO family.

Its subcellular location is the cytoplasm. The protein localises to the perinuclear region. It is found in the cytoskeleton. The protein resides in the cytoplasmic vesicle. It localises to the autophagosome membrane. Xenophagy-specific receptor required for autophagy-mediated intracellular bacteria degradation. Acts as an effector protein of galectin-sensed membrane damage that restricts the proliferation of infecting pathogens upon entry into the cytosol by targeting galectin-associated bacteria for autophagy. Initially orchestrates bacteria targeting to autophagosomes and subsequently ensures pathogen degradation by regulating pathogen-containing autophagosome maturation. May play a role in ruffle formation and actin cytoskeleton organization and seems to negatively regulate constitutive secretion. This Xenopus tropicalis (Western clawed frog) protein is Calcium-binding and coiled-coil domain-containing protein 2.